The sequence spans 121 residues: Glycine cleavage system H protein (121 aa).

The region spanning 16–98 (VATVGITAYA…ESGGWFAKIK (83 aa)) is the Lipoyl-binding domain. Lys-57 is modified (N6-lipoyllysine).

The protein belongs to the GcvH family. The glycine cleavage system is composed of four proteins: P, T, L and H. The cofactor is (R)-lipoate.

The glycine cleavage system catalyzes the degradation of glycine. The H protein shuttles the methylamine group of glycine from the P protein to the T protein. The chain is Glycine cleavage system H protein from Caulobacter vibrioides (strain NA1000 / CB15N) (Caulobacter crescentus).